The sequence spans 312 residues: tRNA uridine(34) hydroxylase (312 aa).

Residues 130 to 225 (RGDEVVFFDG…YGEQFGNKGL (96 aa)) form the Rhodanese domain. Cysteine 185 (cysteine persulfide intermediate) is an active-site residue.

It belongs to the TrhO family.

The catalysed reaction is uridine(34) in tRNA + AH2 + O2 = 5-hydroxyuridine(34) in tRNA + A + H2O. Catalyzes oxygen-dependent 5-hydroxyuridine (ho5U) modification at position 34 in tRNAs. In Corynebacterium glutamicum (strain ATCC 13032 / DSM 20300 / JCM 1318 / BCRC 11384 / CCUG 27702 / LMG 3730 / NBRC 12168 / NCIMB 10025 / NRRL B-2784 / 534), this protein is tRNA uridine(34) hydroxylase.